Reading from the N-terminus, the 482-residue chain is MKICFVASECEPLVKVGGLGDVVQSLAKELVNLGHQVSVILPFYKSIKAQNVQFITQHTLNLGGVYYDFHIYKTNLDNVDIFLIDQKTFFGREYVYGTPKGPYEDNYLRFAFFSLASLETLSHVCHIPDIIHIHDWHTALVAVYKDLYFKHLDETATVLTIHNIAFQGIFLGHILPQIGIPWGLFNPEDLEFYNQVNFLKGGIVHSDVITTVSKTHAKEIQTNMGFGLEGVLREKRYVFGILNGIDTESWNPATDKSLYQNYDINTFKAGKEKNKMYVKELFGLETPHTRPLAAFIARLAKQKGLDLIEKAVDDAVKIGYDFIFLGSGDYYYQGKVLDMVKRNMGYVAARIEYNDILSRKLYAGADMFLMPSEYEPCGIGQMIAMRYGAIPIVHKTGGLADTVVDYNEDNEHGTGFSFEDYTYKDFLYTMARAMIVYQKKYIPEDNEWYNIVSNAMAQDFSWRRSVQEYIKIYKTAKLIKMH.

Lysine 15 contacts ADP-alpha-D-glucose.

It belongs to the glycosyltransferase 1 family. Bacterial/plant glycogen synthase subfamily.

It catalyses the reaction [(1-&gt;4)-alpha-D-glucosyl](n) + ADP-alpha-D-glucose = [(1-&gt;4)-alpha-D-glucosyl](n+1) + ADP + H(+). It participates in glycan biosynthesis; glycogen biosynthesis. Synthesizes alpha-1,4-glucan chains using ADP-glucose. In Hydrogenobaculum sp. (strain Y04AAS1), this protein is Glycogen synthase.